Consider the following 1059-residue polypeptide: Protein cappuccino (1059 aa).

Composition is skewed to polar residues over residues 62 to 80 (AAVT…NESG) and 90 to 123 (ATTS…SAAS). 2 disordered regions span residues 62–146 (AAVT…GTPT) and 448–647 (QTES…TAPP). Pro residues predominate over residues 133–142 (LPLPPPPPGF). The span at 468-481 (SDNESAKEDGEKPH) shows a compositional bias: basic and acidic residues. The 81-residue stretch at 480-560 (PHAVAPPPPP…PPPPMSASPS (81 aa)) folds into the FH1 domain. Over residues 483–541 (VAPPPPPPPPPLHAFVAPPPPPPPPPPPPPPLANYGAPPPPPPPPPGSGSAPPPPPPAP) the composition is skewed to pro residues. One can recognise an FH2 domain in the interval 585 to 1032 (RKSAVNPPKP…KKSKQAQIES (448 aa)). Positions 620-629 (TDSTENSGSS) are enriched in polar residues. The interval 1049–1059 (KERMLMRRSKN) is important for interaction with spir.

The protein belongs to the formin homology family. Cappuccino subfamily. Interacts with wash. Interacts with spir.

It localises to the cytoplasm. It is found in the cytoskeleton. The protein localises to the cytosol. The protein resides in the membrane. Its subcellular location is the cytoplasmic vesicle membrane. In terms of biological role, acts as an actin nucleation factor and promotes assembly of actin filaments together with spir. May play a role in intracellular vesicle transport along actin fibers, providing a novel link between actin cytoskeleton dynamics and intracellular transport. This chain is Protein cappuccino (capu), found in Drosophila melanogaster (Fruit fly).